The following is a 341-amino-acid chain: L-threonine 3-dehydrogenase (341 aa).

C38 lines the Zn(2+) pocket. Active-site charge relay system residues include T40 and H43. H63, E64, C93, C96, C99, and C107 together coordinate Zn(2+). NAD(+)-binding positions include I175, D195, R200, 262-264 (LGI), and 286-287 (IY).

This sequence belongs to the zinc-containing alcohol dehydrogenase family. In terms of assembly, homotetramer. Zn(2+) is required as a cofactor.

It localises to the cytoplasm. It catalyses the reaction L-threonine + NAD(+) = (2S)-2-amino-3-oxobutanoate + NADH + H(+). It functions in the pathway amino-acid degradation; L-threonine degradation via oxydo-reductase pathway; glycine from L-threonine: step 1/2. Catalyzes the NAD(+)-dependent oxidation of L-threonine to 2-amino-3-ketobutyrate. This chain is L-threonine 3-dehydrogenase, found in Idiomarina loihiensis (strain ATCC BAA-735 / DSM 15497 / L2-TR).